The chain runs to 362 residues: tRNA-specific 2-thiouridylase MnmA (362 aa).

ATP is bound by residues 8 to 15 (AMSGGVDS) and M35. Residues 95 to 97 (NPD) are interaction with target base in tRNA. Catalysis depends on C100, which acts as the Nucleophile. A disulfide bond links C100 and C196. G124 contacts ATP. An interaction with tRNA region spans residues 146–148 (KDQ). C196 acts as the Cysteine persulfide intermediate in catalysis. An interaction with tRNA region spans residues 303-304 (RY).

The protein belongs to the MnmA/TRMU family.

The protein localises to the cytoplasm. The catalysed reaction is S-sulfanyl-L-cysteinyl-[protein] + uridine(34) in tRNA + AH2 + ATP = 2-thiouridine(34) in tRNA + L-cysteinyl-[protein] + A + AMP + diphosphate + H(+). In terms of biological role, catalyzes the 2-thiolation of uridine at the wobble position (U34) of tRNA, leading to the formation of s(2)U34. The sequence is that of tRNA-specific 2-thiouridylase MnmA from Chlamydia abortus (strain DSM 27085 / S26/3) (Chlamydophila abortus).